Consider the following 200-residue polypeptide: Lipopolysaccharide core heptose(II)-phosphate phosphatase (200 aa).

The signal sequence occupies residues 1 to 25 (MLAFCRSSLKSKKYIIILLALAAIA).

Belongs to the phosphoglycerate mutase family. Ais subfamily.

Its subcellular location is the periplasm. It participates in bacterial outer membrane biogenesis; lipopolysaccharide metabolism. In terms of biological role, catalyzes the dephosphorylation of heptose(II) of the outer membrane lipopolysaccharide core. The polypeptide is Lipopolysaccharide core heptose(II)-phosphate phosphatase (Escherichia coli (strain ATCC 8739 / DSM 1576 / NBRC 3972 / NCIMB 8545 / WDCM 00012 / Crooks)).